Consider the following 371-residue polypeptide: DNA replication and repair protein RecF (371 aa).

30 to 37 (GENAQGKT) is a binding site for ATP.

Belongs to the RecF family.

It is found in the cytoplasm. In terms of biological role, the RecF protein is involved in DNA metabolism; it is required for DNA replication and normal SOS inducibility. RecF binds preferentially to single-stranded, linear DNA. It also seems to bind ATP. The protein is DNA replication and repair protein RecF of Staphylococcus haemolyticus (strain JCSC1435).